Consider the following 1139-residue polypeptide: Dual 3',5'-cyclic-AMP and -GMP phosphodiesterase beta (1139 aa).

Disordered regions lie at residues 1–42 (MGKV…NINK) and 154–177 (GISEDNRQNQRNADNNSLNWSTSN). Residues 1–429 (MGKVEDFEEH…LNLNNWISSR (429 aa)) are Cytoplasmic-facing. A compositionally biased stretch (basic and acidic residues) spans 9–22 (EHNKNSNQDIEKNV). A compositionally biased stretch (polar residues) spans 29–42 (NSNTINDQNENINK). The chain crosses the membrane as a helical span at residues 430-450 (MIIIGIVMLILSFIIWPLTTW). Over 451 to 462 (SLKTSTWGRETY) the chain is Extracellular. A helical transmembrane segment spans residues 463–483 (IIILFHTLMAINTLILIFFII). The Cytoplasmic segment spans residues 484-498 (IGSTELCKYSECMSY). A helical transmembrane segment spans residues 499 to 519 (VLFSLMVALWGLWNIAIGLTL). The Extracellular segment spans residues 520-536 (EYNPNLSEMPTTTYELE). N524 carries an N-linked (GlcNAc...) asparagine glycan. Residues 537–557 (MIYVLTYIYGFLPLVIIDIFF) traverse the membrane as a helical segment. Residues 558-564 (PSRTKYN) lie on the Cytoplasmic side of the membrane. A helical membrane pass occupies residues 565–585 (WIIHLIFIFLNSSSIILVGSA). At 586–592 (KPDFVPE) the chain is on the extracellular side. A helical transmembrane segment spans residues 593–613 (IYVVFRILAYTTLCIFLYIGS). Residues 614 to 1139 (YTSELQIRYV…TLFFIKNVSD (526 aa)) are Cytoplasmic-facing. The region spanning 775–1098 (INISQLTKMI…IMWDTLMKEE (324 aa)) is the PDEase domain. H847 acts as the Proton donor in catalysis. 847-851 (HNTIH) provides a ligand contact to a nucleoside 3',5'-cyclic phosphate. H851, H887, D888, and D1000 together coordinate a divalent metal cation. A nucleoside 3',5'-cyclic phosphate is bound by residues D888, D1000, and Q1052.

The protein belongs to the cyclic nucleotide phosphodiesterase family. A divalent metal cation is required as a cofactor.

It is found in the cell membrane. The protein resides in the endoplasmic reticulum membrane. The enzyme catalyses 3',5'-cyclic GMP + H2O = GMP + H(+). It carries out the reaction 3',5'-cyclic AMP + H2O = AMP + H(+). It functions in the pathway purine metabolism; 3',5'-cyclic GMP degradation; GMP from 3',5'-cyclic GMP: step 1/1. It participates in purine metabolism; 3',5'-cyclic AMP degradation; AMP from 3',5'-cyclic AMP: step 1/1. In terms of biological role, plays a role in signal transduction by regulating the intracellular concentration of cyclic nucleotides cAMP and cGMP. Catalyzes the hydrolysis of both cAMP and cGMP to 5'-AMP and 5'-GMP, respectively. By regulating cAMP levels during the asexual blood stage and, thus PKA activation, required for merozoite invasion of erythrocytes and for the parasite development immediately following invasion. This chain is Dual 3',5'-cyclic-AMP and -GMP phosphodiesterase beta, found in Plasmodium falciparum (isolate 3D7).